The following is a 620-amino-acid chain: Chaperone protein HtpG (620 aa).

An a; substrate-binding region spans residues Met-1–Arg-334. Residues Glu-335–Arg-548 form a b region. A c region spans residues Met-549–Leu-620.

It belongs to the heat shock protein 90 family. As to quaternary structure, homodimer.

The protein localises to the cytoplasm. Its function is as follows. Molecular chaperone. Has ATPase activity. The polypeptide is Chaperone protein HtpG (Rhodopseudomonas palustris (strain BisA53)).